Reading from the N-terminus, the 214-residue chain is Pyridoxine/pyridoxamine 5'-phosphate oxidase (214 aa).

Substrate contacts are provided by residues 9 to 12 (RKNY) and Lys-67. Residues 62-67 (RIVLLK), 77-78 (YT), Lys-83, Lys-84, and Gln-106 each bind FMN. Residues Tyr-124, Arg-128, and Ser-132 each coordinate substrate. FMN contacts are provided by residues 141 to 142 (QS) and Trp-186. 192-194 (RLH) is a binding site for substrate. Arg-196 is an FMN binding site.

Belongs to the pyridoxamine 5'-phosphate oxidase family. Homodimer. It depends on FMN as a cofactor.

It carries out the reaction pyridoxamine 5'-phosphate + O2 + H2O = pyridoxal 5'-phosphate + H2O2 + NH4(+). The enzyme catalyses pyridoxine 5'-phosphate + O2 = pyridoxal 5'-phosphate + H2O2. It functions in the pathway cofactor metabolism; pyridoxal 5'-phosphate salvage; pyridoxal 5'-phosphate from pyridoxamine 5'-phosphate: step 1/1. It participates in cofactor metabolism; pyridoxal 5'-phosphate salvage; pyridoxal 5'-phosphate from pyridoxine 5'-phosphate: step 1/1. Its function is as follows. Catalyzes the oxidation of either pyridoxine 5'-phosphate (PNP) or pyridoxamine 5'-phosphate (PMP) into pyridoxal 5'-phosphate (PLP). This chain is Pyridoxine/pyridoxamine 5'-phosphate oxidase, found in Leptospira borgpetersenii serovar Hardjo-bovis (strain JB197).